The sequence spans 112 residues: Gastrula zinc finger protein XlCGF9.1 (112 aa).

C2H2-type zinc fingers lie at residues 6–28, 34–56, 62–84, and 90–112; these read FICS…MKIH, FCCP…ERTH, FTCP…RIIH, and YSCP…FKIH.

This sequence belongs to the krueppel C2H2-type zinc-finger protein family.

The protein resides in the nucleus. May be involved in transcriptional regulation. This is Gastrula zinc finger protein XlCGF9.1 from Xenopus laevis (African clawed frog).